The primary structure comprises 496 residues: 3-octaprenyl-4-hydroxybenzoate carboxy-lyase (496 aa).

Position 181 (asparagine 181) interacts with Mn(2+). Prenylated FMN contacts are provided by residues 184 to 186, 198 to 200, and 203 to 204; these read IYR, RWL, and RG. Glutamate 247 provides a ligand contact to Mn(2+). Aspartate 296 functions as the Proton donor in the catalytic mechanism.

It belongs to the UbiD family. Homohexamer. Requires prenylated FMN as cofactor. Mn(2+) serves as cofactor.

Its subcellular location is the cell membrane. The enzyme catalyses a 4-hydroxy-3-(all-trans-polyprenyl)benzoate + H(+) = a 2-(all-trans-polyprenyl)phenol + CO2. It functions in the pathway cofactor biosynthesis; ubiquinone biosynthesis. In terms of biological role, catalyzes the decarboxylation of 3-octaprenyl-4-hydroxy benzoate to 2-octaprenylphenol, an intermediate step in ubiquinone biosynthesis. This is 3-octaprenyl-4-hydroxybenzoate carboxy-lyase from Aromatoleum aromaticum (strain DSM 19018 / LMG 30748 / EbN1) (Azoarcus sp. (strain EbN1)).